A 144-amino-acid chain; its full sequence is Transcription antitermination protein NusB (144 aa).

This sequence belongs to the NusB family.

Functionally, involved in transcription antitermination. Required for transcription of ribosomal RNA (rRNA) genes. Binds specifically to the boxA antiterminator sequence of the ribosomal RNA (rrn) operons. The sequence is that of Transcription antitermination protein NusB from Haemophilus influenzae (strain 86-028NP).